The chain runs to 105 residues: Large ribosomal subunit protein bL21 (105 aa).

The protein belongs to the bacterial ribosomal protein bL21 family. In terms of assembly, part of the 50S ribosomal subunit. Contacts protein L20.

Functionally, this protein binds to 23S rRNA in the presence of protein L20. The polypeptide is Large ribosomal subunit protein bL21 (Stenotrophomonas maltophilia (strain R551-3)).